We begin with the raw amino-acid sequence, 93 residues long: Cell division topological specificity factor (93 aa).

Belongs to the MinE family.

Prevents the cell division inhibition by proteins MinC and MinD at internal division sites while permitting inhibition at polar sites. This ensures cell division at the proper site by restricting the formation of a division septum at the midpoint of the long axis of the cell. This is Cell division topological specificity factor from Methylococcus capsulatus (strain ATCC 33009 / NCIMB 11132 / Bath).